Consider the following 237-residue polypeptide: tRNA1(Val) (adenine(37)-N6)-methyltransferase (237 aa).

This sequence belongs to the methyltransferase superfamily. tRNA (adenine-N(6)-)-methyltransferase family.

The protein resides in the cytoplasm. It catalyses the reaction adenosine(37) in tRNA1(Val) + S-adenosyl-L-methionine = N(6)-methyladenosine(37) in tRNA1(Val) + S-adenosyl-L-homocysteine + H(+). Functionally, specifically methylates the adenine in position 37 of tRNA(1)(Val) (anticodon cmo5UAC). This is tRNA1(Val) (adenine(37)-N6)-methyltransferase from Bacteroides fragilis (strain YCH46).